We begin with the raw amino-acid sequence, 632 residues long: tRNA uridine 5-carboxymethylaminomethyl modification enzyme MnmG (632 aa).

Residues 15 to 20, Ile127, and Ser182 contribute to the FAD site; that span reads GAGHAG. 276-290 provides a ligand contact to NAD(+); it reads GPRYCPSIEDKIVRF. Gln373 serves as a coordination point for FAD.

Belongs to the MnmG family. Homodimer. Heterotetramer of two MnmE and two MnmG subunits. It depends on FAD as a cofactor.

The protein localises to the cytoplasm. Its function is as follows. NAD-binding protein involved in the addition of a carboxymethylaminomethyl (cmnm) group at the wobble position (U34) of certain tRNAs, forming tRNA-cmnm(5)s(2)U34. This Streptococcus pyogenes serotype M1 protein is tRNA uridine 5-carboxymethylaminomethyl modification enzyme MnmG.